Consider the following 455-residue polypeptide: Gamma-aminobutyric acid receptor subunit alpha-1 (455 aa).

An N-terminal signal peptide occupies residues methionine 1–glycine 27. Residues glutamine 28–phenylalanine 253 are Extracellular-facing. An N-linked (GlcNAc...) asparagine glycan is attached at asparagine 38. Arginine 94 contacts 4-aminobutanoate. The N-linked (GlcNAc...) asparagine glycan is linked to asparagine 138. Position 157 (threonine 157) interacts with 4-aminobutanoate. Residues cysteine 166 and cysteine 180 are joined by a disulfide bond. Residues valine 254 to leucine 274 traverse the membrane as a helical segment. Topologically, residues asparagine 275–valine 279 are cytoplasmic. Residues proline 280–arginine 301 form a helical membrane-spanning segment. Over asparagine 302–threonine 311 the chain is Extracellular. Residues alanine 312–threonine 333 traverse the membrane as a helical segment. Topologically, residues valine 334–arginine 420 are cytoplasmic. A helical transmembrane segment spans residues leucine 421 to threonine 440. Topologically, residues tyrosine 441–glutamine 455 are extracellular.

It belongs to the ligand-gated ion channel (TC 1.A.9) family. Gamma-aminobutyric acid receptor (TC 1.A.9.5) subfamily. GABRA1 sub-subfamily. As to quaternary structure, heteropentamer, formed by a combination of alpha (GABRA1-6), beta (GABRB1-3), gamma (GABRG1-3), delta (GABRD), epsilon (GABRE), rho (GABRR1-3), pi (GABRP) and theta (GABRQ) subunits, each subunit exhibiting distinct physiological and pharmacological properties. As to expression, brain.

The protein resides in the postsynaptic cell membrane. The protein localises to the cell membrane. It catalyses the reaction chloride(in) = chloride(out). Allosterically activated by benzodiazepines, the neuroanesthetic alphaxalone and pentobarbital. Inhibited by the antagonist bicuculline. Potentiated by histamine. Alpha subunit of the heteropentameric ligand-gated chloride channel gated by gamma-aminobutyric acid (GABA), a major inhibitory neurotransmitter in the brain. GABA-gated chloride channels, also named GABA(A) receptors (GABAAR), consist of five subunits arranged around a central pore and contain GABA active binding site(s) located at the alpha and beta subunit interface(s). When activated by GABA, GABAARs selectively allow the flow of chloride anions across the cell membrane down their electrochemical gradient. Chloride influx into the postsynaptic neuron following GABAAR opening decreases the neuron ability to generate a new action potential, thereby reducing nerve transmission. The GABAARs can also initiate the formation of functional inhibitory GABAergic synapses. GABAARs function also as histamine receptor where histamine binds at the interface of two neighboring beta subunits and potentiates GABA response. The sequence is that of Gamma-aminobutyric acid receptor subunit alpha-1 (GABRA1) from Gallus gallus (Chicken).